The primary structure comprises 269 residues: Membrane protein insertase YidC 1 (269 aa).

Positions 1–20 are cleaved as a signal peptide; it reads MKKKFSLIAMAGAALLLLTA. Residue C21 is the site of N-palmitoyl cysteine attachment. C21 carries S-diacylglycerol cysteine lipidation. A run of 4 helical transmembrane segments spans residues 45–65, 124–144, 165–185, and 203–223; these read IRFL…TIVI, YMGC…YQAL, PTFI…YLMM, and PIFI…YWVI.

It belongs to the OXA1/ALB3/YidC family. Type 2 subfamily.

The protein resides in the cell membrane. Required for the insertion and/or proper folding and/or complex formation of integral membrane proteins into the membrane. Involved in integration of membrane proteins that insert both dependently and independently of the Sec translocase complex, as well as at least some lipoproteins. The chain is Membrane protein insertase YidC 1 from Lactococcus lactis subsp. lactis (strain IL1403) (Streptococcus lactis).